Here is a 316-residue protein sequence, read N- to C-terminus: Haloacid dehalogenase-like hydrolase domain-containing protein At4g39970 (316 aa).

The transit peptide at 1–46 (MAVSCNHSAILFSPSSTAGSSSVTSSSSLIGFPRFQTLRFKSRSVY) directs the protein to the chloroplast. The active-site Nucleophile is the D69. Positions 69, 71, and 259 each coordinate Mg(2+). Residue D71 is the Proton donor of the active site.

This sequence belongs to the HAD-like hydrolase superfamily. DOG/GPP family. It depends on Mg(2+) as a cofactor.

It is found in the plastid. It localises to the chloroplast. In Arabidopsis thaliana (Mouse-ear cress), this protein is Haloacid dehalogenase-like hydrolase domain-containing protein At4g39970.